The following is a 294-amino-acid chain: Pantothenate synthetase 3 (294 aa).

Position 31 to 38 (31 to 38) interacts with ATP; the sequence is MGALHEGH. His38 serves as the catalytic Proton donor. Gln62 serves as a coordination point for (R)-pantoate. Gln62 provides a ligand contact to beta-alanine. 154-157 serves as a coordination point for ATP; the sequence is GEKD. Residue Gln160 coordinates (R)-pantoate. 191 to 194 is an ATP binding site; it reads LSSR.

The protein belongs to the pantothenate synthetase family. Homodimer.

The protein resides in the cytoplasm. The enzyme catalyses (R)-pantoate + beta-alanine + ATP = (R)-pantothenate + AMP + diphosphate + H(+). Its pathway is cofactor biosynthesis; (R)-pantothenate biosynthesis; (R)-pantothenate from (R)-pantoate and beta-alanine: step 1/1. Functionally, catalyzes the condensation of pantoate with beta-alanine in an ATP-dependent reaction via a pantoyl-adenylate intermediate. The protein is Pantothenate synthetase 3 of Frankia alni (strain DSM 45986 / CECT 9034 / ACN14a).